The sequence spans 374 residues: Homeobox protein knotted-1-like 13 (374 aa).

The tract at residues 214–242 (TGASPGEGTGATMSDGEDDQADSEANMYD) is disordered. The region spanning 270 to 290 (ELKHELKQGYKEKLIDIREEI) is the ELK domain. The homeobox; TALE-type DNA-binding region spans 291-354 (LRKRRAGKLP…NQRKRNWHSN (64 aa)). The disordered stretch occupies residues 347 to 374 (RKRNWHSNPSSSTSVKTKRKSNAGDNNS).

This sequence belongs to the TALE/KNOX homeobox family. As to expression, isoforms 1 and 2 are expressed in roots, stems, shoot meristem, leaf blades, leaf sheaths and flowers. Isoform 3 is expressed in stems, shoot meristem, rachis, leaf blades and leaf sheaths.

The protein localises to the nucleus. Functionally, isoform 3 acts as a transcription activator, but isoforms 1 and 2 do not. This Oryza sativa subsp. japonica (Rice) protein is Homeobox protein knotted-1-like 13 (OSH45).